Consider the following 336-residue polypeptide: Flap endonuclease 1 (336 aa).

The interval 1–98 (MGADIGDLFE…AEIEERKKRR (98 aa)) is N-domain. 7 residues coordinate Mg(2+): Asp27, Asp80, Glu151, Glu153, Asp172, Asp174, and Asp235. The segment at 115 to 256 (DAKKYAQAAG…KALNYIKTYG (142 aa)) is I-domain. The segment at 328 to 336 (TQATLERWF) is interaction with PCNA.

This sequence belongs to the XPG/RAD2 endonuclease family. FEN1 subfamily. In terms of assembly, interacts with PCNA. PCNA stimulates the nuclease activity without altering cleavage specificity. Mg(2+) serves as cofactor.

Structure-specific nuclease with 5'-flap endonuclease and 5'-3' exonuclease activities involved in DNA replication and repair. During DNA replication, cleaves the 5'-overhanging flap structure that is generated by displacement synthesis when DNA polymerase encounters the 5'-end of a downstream Okazaki fragment. Binds the unpaired 3'-DNA end and kinks the DNA to facilitate 5' cleavage specificity. Cleaves one nucleotide into the double-stranded DNA from the junction in flap DNA, leaving a nick for ligation. Also involved in the base excision repair (BER) pathway. Acts as a genome stabilization factor that prevents flaps from equilibrating into structures that lead to duplications and deletions. Also possesses 5'-3' exonuclease activity on nicked or gapped double-stranded DNA. In Archaeoglobus fulgidus (strain ATCC 49558 / DSM 4304 / JCM 9628 / NBRC 100126 / VC-16), this protein is Flap endonuclease 1.